A 362-amino-acid chain; its full sequence is tRNA/tmRNA (uracil-C(5))-methyltransferase (362 aa).

S-adenosyl-L-methionine is bound by residues glutamine 186, tyrosine 214, asparagine 219, glutamate 235, and aspartate 295. Cysteine 320 serves as the catalytic Nucleophile. Residue glutamate 354 is the Proton acceptor of the active site.

Belongs to the class I-like SAM-binding methyltransferase superfamily. RNA M5U methyltransferase family. TrmA subfamily.

The catalysed reaction is uridine(54) in tRNA + S-adenosyl-L-methionine = 5-methyluridine(54) in tRNA + S-adenosyl-L-homocysteine + H(+). It carries out the reaction uridine(341) in tmRNA + S-adenosyl-L-methionine = 5-methyluridine(341) in tmRNA + S-adenosyl-L-homocysteine + H(+). Its function is as follows. Dual-specificity methyltransferase that catalyzes the formation of 5-methyluridine at position 54 (m5U54) in all tRNAs, and that of position 341 (m5U341) in tmRNA (transfer-mRNA). The polypeptide is tRNA/tmRNA (uracil-C(5))-methyltransferase (Stutzerimonas stutzeri (strain A1501) (Pseudomonas stutzeri)).